A 444-amino-acid polypeptide reads, in one-letter code: Glycine receptor subunit alphaZ1 (444 aa).

An N-terminal signal peptide occupies residues 1–24; the sequence is MFALGIYLWETIVFFSLAASQQAA. At 25-246 the chain is on the extracellular side; that stretch reads ARKAASPMPP…RFHLERQMGY (222 aa). Asparagine 62 is a glycosylation site (N-linked (GlcNAc...) asparagine). 2 residues coordinate glycine: arginine 89 and serine 153. A disulfide bridge links cysteine 162 with cysteine 176. 2 residues coordinate Zn(2+): glutamate 216 and aspartate 218. Cysteine 222 and cysteine 233 are joined by a disulfide. Strychnine is bound at residue 226-231; sequence YNTGKF. Glycine is bound at residue threonine 228. Position 239 (histidine 239) interacts with Zn(2+). Residues 247–268 form a helical membrane-spanning segment; it reads YLIQMYIPSLLIVILSWVSFWI. The Cytoplasmic segment spans residues 269–273; that stretch reads NMDAA. Residues 274–294 form a helical membrane-spanning segment; sequence PARVGLGITTVLTMTTQSSGS. At 295–305 the chain is on the extracellular side; that stretch reads RASLPKVSYVK. The helical transmembrane segment at 306–326 threads the bilayer; that stretch reads AIDIWMAVCLLFVFSALLEYA. The Cytoplasmic segment spans residues 327 to 412; it reads AVNFIARQHK…FISRAKRIDT (86 aa). The helical transmembrane segment at 413-433 threads the bilayer; it reads VSRVAFPLVFLIFNIFYWITY. Over 434-444 the chain is Extracellular; it reads KIIRSEDIHKQ.

The protein belongs to the ligand-gated ion channel (TC 1.A.9) family. Glycine receptor (TC 1.A.9.3) subfamily. GLRA1 sub-subfamily. Homopentamer (in vitro). Heteropentamer composed of glra1 and glrb. Both homopentamers and heteropentamers form functional ion channels. Interacts with glrb. In terms of tissue distribution, expressed in brain.

The protein localises to the postsynaptic cell membrane. It is found in the synapse. Its subcellular location is the perikaryon. The protein resides in the cell projection. It localises to the dendrite. The protein localises to the cell membrane. The catalysed reaction is chloride(in) = chloride(out). Activated by glycine and taurine. Inhibited by strychnine. Allosterically activated by ivermectin. Inhibited by picrotoxinin. Strychnine binding locks the channel in a closed conformation and prevents channel opening in response to extracellular glycine. Can also be activated by GABA and inhibited by bicuculline, but this requires heterologous expression in human cells. Subunit of heteromeric glycine-gated chloride channels. Plays an important role in the down-regulation of neuronal excitability. Contributes to the generation of inhibitory postsynaptic currents. Channel activity is potentiated by ethanol. The sequence is that of Glycine receptor subunit alphaZ1 (glra1) from Danio rerio (Zebrafish).